The following is a 158-amino-acid chain: Endoribonuclease YbeY (158 aa).

Positions 124, 128, and 134 each coordinate Zn(2+).

The protein belongs to the endoribonuclease YbeY family. Requires Zn(2+) as cofactor.

The protein localises to the cytoplasm. Its function is as follows. Single strand-specific metallo-endoribonuclease involved in late-stage 70S ribosome quality control and in maturation of the 3' terminus of the 16S rRNA. The polypeptide is Endoribonuclease YbeY (Latilactobacillus sakei subsp. sakei (strain 23K) (Lactobacillus sakei subsp. sakei)).